Reading from the N-terminus, the 264-residue chain is Apolipoprotein A-I (264 aa).

A signal peptide spans 1–18 (MKAVVLAVALVFLTGSQA). Tandem repeats lie at residues 67–88 (LNLL…ERLG) and 89–110 (PLTR…QEMN). The segment at 67-264 (LNLLENWDTL…DKASETLTAQ (198 aa)) is 10 X approximate tandem repeats. Met109 carries the methionine sulfoxide modification. One copy of the 3; half-length repeat lies at 111–121 (KDLEEVKQKVQ). 3 tandem repeats follow at residues 122–143 (PYLD…QKVA), 144–165 (PLGA…GRLS), and 166–187 (PVAE…TQLA). The stretch at 188 to 207 (PHSEQMRESLAQRLAELKSN) is one 7; truncated repeat. Met193 bears the Methionine sulfoxide mark. Repeat 8 spans residues 208-229 (PTLNEYHTRAKTHLKTLGEKAR). Residues 230 to 240 (PALEDLRHSLM) form a 9; half-length repeat. Residues Met240 and Met242 each carry the methionine sulfoxide modification. Residues 241 to 264 (PMLETLKTQVQSVIDKASETLTAQ) form repeat 10.

This sequence belongs to the apolipoprotein A1/A4/E family. As to quaternary structure, homodimer. Interacts with APOA1BP and CLU. Component of a sperm activating protein complex (SPAP), consisting of APOA1, an immunoglobulin heavy chain, an immunoglobulin light chain and albumin. Interacts with NDRG1. Interacts with SCGB3A2. Interacts with NAXE and YJEFN3. Post-translationally, glycosylated. Palmitoylated. In terms of processing, may be acylated. Post-translationally, phosphorylation sites are present in the extracellular medium. Major protein of plasma HDL, also found in chylomicrons.

It localises to the secreted. In terms of biological role, participates in the reverse transport of cholesterol from tissues to the liver for excretion by promoting cholesterol efflux from tissues and by acting as a cofactor for the lecithin cholesterol acyltransferase (LCAT). As part of the SPAP complex, activates spermatozoa motility. In Mus musculus (Mouse), this protein is Apolipoprotein A-I (Apoa1).